Reading from the N-terminus, the 554-residue chain is Glucose-binding protein GlcS (554 aa).

Residues 1–17 are Cytoplasmic-facing; sequence MKRKYPYSLAKGLTSTQ. The helical transmembrane segment at 18-38 threads the bilayer; sequence IAVIVAVIVIVIIIGVVAGFV. The Extracellular segment spans residues 39-525; that stretch reads LTKGPSTTAV…YGLTNNTQKT (487 aa). The chain crosses the membrane as a helical span at residues 526–546; sequence SNSVMLFLLPFLALPLAIASI. Residues 547-554 are Cytoplasmic-facing; sequence DNKYYLLK.

It belongs to the bacterial solute-binding protein 1 family. As to quaternary structure, the complex is composed of two ATP-binding proteins (GlcV), two transmembrane proteins (GlcT and GlcU) and a solute-binding protein (GlcS).

It localises to the cell membrane. Binding of glucose is strongly inhibited by galactose and mannose. Functionally, part of the ABC transporter complex GlcSTUV involved in glucose uptake. Binds glucose. Can also bind galactose and mannose. This is Glucose-binding protein GlcS from Saccharolobus solfataricus (strain ATCC 35092 / DSM 1617 / JCM 11322 / P2) (Sulfolobus solfataricus).